Here is a 440-residue protein sequence, read N- to C-terminus: MDIAGKNREQWLAAYPLLQQIVLTKEVWWANPNRQPASEGLARLSLKEEDVKEAEQRLRRFAPYIASVFPETKGAGGLIESPLIDIPTMKHKLDQRFGQNVPGRLLLKGDHALPISGSIKARGGIYEVLKHAESLLVDQQILTKQDDYSLIATDAVQSFFSSYAIVVGSTGNLGLSIGIISAKLGFRVTVHMSDDAKQWKKDMLREKGVRVVEHSADYSKAVEEGRKESDADPNSYFIDDEHSIDLFVGYAVAAFRLKEQLQEKGIAVTKDQPLHVYLPCGVGGGPGGVAFGLKLVFGDAVRCFFAEPTHSPCMLIGMLTGKHQHISVQDFGIDNQTAADGLAVGRPSGFVGRMMAPLLEGIYTIADPMLYTLLADLADAEGLYLEPSAVAGLYGPVQLEKRGLYTDAATHLVWATGGSMVPKEIMETDYQLGVNLRTEQ.

Lys-120 carries the N6-(pyridoxal phosphate)lysine modification.

The protein belongs to the serine/threonine dehydratase family. DsdA subfamily. The cofactor is pyridoxal 5'-phosphate.

The catalysed reaction is D-serine = pyruvate + NH4(+). The chain is Probable D-serine dehydratase from Shouchella clausii (strain KSM-K16) (Alkalihalobacillus clausii).